Consider the following 969-residue polypeptide: Probable Rho-type GTPase-activating protein 3 (969 aa).

2 consecutive LIM zinc-binding domains span residues 17-81 (TVCF…CTAC) and 76-135 (HTCT…RHPS). 3 disordered regions span residues 170 to 223 (IEIM…ADSL), 348 to 459 (ATSP…VEEL), and 613 to 646 (TSSK…SPNL). The segment covering 193 to 202 (ETPTNMSQAE) has biased composition (polar residues). Low complexity-rich tracts occupy residues 212–223 (DSNLASNSADSL) and 350–361 (SPFRPFSPSYRS). Composition is skewed to polar residues over residues 369–392 (TRSP…SFAQ) and 418–432 (LSET…SLGS). Positions 450 to 459 (SERDSDVEEL) are enriched in basic and acidic residues. The segment covering 613–623 (TSSKNTTSSIN) has biased composition (low complexity). Polar residues predominate over residues 624–637 (PLTAVSSNSGQSSG). The segment at 697–744 (DHVFHVNAIFKPSRCYICSESVWGSELRCFHCSISCHSRCLKRLFAES) adopts a Phorbol-ester/DAG-type zinc-finger fold. In terms of domain architecture, Rho-GAP spans 780 to 966 (RSLENQLKIE…FMLDNVDKIL (187 aa)).

As to quaternary structure, interacts with dil1.

The protein localises to the cell tip. Functionally, GTPase-activating protein for Rho-type proteins. This is Probable Rho-type GTPase-activating protein 3 (rga3) from Schizosaccharomyces pombe (strain 972 / ATCC 24843) (Fission yeast).